A 422-amino-acid chain; its full sequence is Adhesin YadA (422 aa).

The signal sequence occupies residues 1 to 25 (MTKDFKISVSAALISALFSSPYAFA). The segment at 26 to 330 (NNDEVHFTAV…KKAIRESNQY (305 aa)) is surface exposed passenger domain. A coiled-coil region spans residues 206–236 (VNVAQLKKEIEKTQVNANKKSAEVLGIANNY). Positions 331 to 368 (TDHKFRQLDNRLDKLDTRVDKGLASSAALNSLFQPYGV) are outer membrane translocation of the passenger domain. The next 4 membrane-spanning stretches (beta stranded) occupy residues 369–379 (GKVNFTAGVGG), 383–394 (SQALAIGSGYRV), 401–407 (KAGVAYA), and 411–422 (DVMYNASFNIEW). The segment at 369–422 (GKVNFTAGVGGYRSSQALAIGSGYRVNESVALKAGVAYAGSSDVMYNASFNIEW) is translocator domain.

It belongs to the autotransporter-2 (AT-2) (TC 1.B.40) family. In terms of assembly, homotrimer; trimers are very stable, not disrupted by heating at 95 degrees Celsius for 10 minutes in SDS sample buffer.

The protein resides in the cell surface. The protein localises to the cell outer membrane. Functionally, collagen-binding outer membrane protein forming a fibrillar matrix on the bacterial cell surface and phagocytosis resistance. Promotes initial attachment and invasion of eukaryotic cells. Also protects the bacteria by being responsible for agglutination, serum resistance and complement inactivation. Gly-389 plays an important role in this protein; replacing it with increasingly large polar residues decreases expression levels and trimer stability. Residues larger than Ser (Thr, Asn or His) significantly decrease serume resistance and bacterial autoagglution without affecting adhesion to host cells or host cell cytokine production. The sequence is that of Adhesin YadA from Yersinia enterocolitica serotype O:8 / biotype 1B (strain NCTC 13174 / 8081).